We begin with the raw amino-acid sequence, 763 residues long: ATP-dependent RNA helicase glh-1 (763 aa).

The segment at 1–30 (MSDGWSDSESAAKAKTGFGSGGGFGGGNNG) is disordered. Gly residues predominate over residues 18-30 (FGSGGGFGGGNNG). 7 repeat units span residues 24-33 (FGGGNNGGSG), 34-43 (FGGGKNGGTG), 44-53 (FGGGNTGGSG), 54-63 (FGGGNTGGSG), 64-73 (FGGGKTGGSG), 74-83 (FGGGNTCGSG), and 84-93 (FGGGSTGGSP). The tract at residues 24–93 (FGGGNNGGSG…FGGGSTGGSP (70 aa)) is 7 X 10 AA tandem repeats, Gly-rich. 2 CCHC-type zinc fingers span residues 158-175 (NNCF…DCPE) and 183-200 (RVCY…ECTE). The disordered stretch occupies residues 193-230 (HTSRECTEERKPREGRTGGFGGGAGFGNNGGNDGFGGD). The span at 194–208 (TSRECTEERKPREGR) shows a compositional bias: basic and acidic residues. Positions 209–230 (TGGFGGGAGFGNNGGNDGFGGD) are enriched in gly residues. 2 consecutive CCHC-type zinc fingers follow at residues 242–259 (MKCF…ECPE) and 262–279 (RGCF…ECPN). The Q motif signature appears at 341–369 (KTFAEANLTETMQKNVAHAGYSKTTPIQQ). Residues 372-556 (LPLVHQGYDI…RAFLRENYVM (185 aa)) enclose the Helicase ATP-binding domain. Residue 385-392 (AQTGSGKT) coordinates ATP. Residues 423 to 427 (ILTPT) carry the Phosphodegron motif. Residues 499–502 (DEAD) carry the DEAD box motif. The 148-residue stretch at 592–739 (DIDSYTTEKS…IVPDWMQGAA (148 aa)) folds into the Helicase C-terminal domain.

Belongs to the DEAD box helicase family. DDX4/VASA subfamily. Interacts with csn-5; this may prevent glh-1 degradation induced by kgb-1. Interacts with zyx-1. Interacts (via the N-terminal region containing the four CCHC zinc fingers) with pan-1. Interacts with kgb-1; this may promote glh-1 degradation by the proteasome. In terms of processing, phosphorylated by kgb-1 (in vitro); this may be responsible for its degradation by the proteasome.

It localises to the cytoplasm. It is found in the cytoplasmic granule. The protein localises to the perinuclear region. The catalysed reaction is ATP + H2O = ADP + phosphate + H(+). In terms of biological role, probable ATP-binding RNA helicase. May act redundantly with the P-granule component glh-4 to regulate the formation of the granular structure of P-granules in embryos. Plays a role in positively regulating the localization of pgl-1 to P-granules. May play a role in transgenerational epigenetic inheritance. May protect somatic cells from excessive apoptosis during normal development. The chain is ATP-dependent RNA helicase glh-1 from Caenorhabditis elegans.